We begin with the raw amino-acid sequence, 297 residues long: Protein AKTIP homolog (297 aa).

Positions 13 to 75 (FLSDLDEKSS…QRSPSGSSPE (63 aa)) are disordered. Positions 17–42 (LDEKSSSSPHDEKKPGDGREVREEKS) are enriched in basic and acidic residues. The segment covering 59–75 (MNLSIARQRSPSGSSPE) has biased composition (polar residues). The UBC core domain occupies 84–232 (FLEYTLMAEY…VNECLRRCHN (149 aa)).

This sequence belongs to the ubiquitin-conjugating enzyme family. FTS subfamily.

This Nematostella vectensis (Starlet sea anemone) protein is Protein AKTIP homolog.